Consider the following 938-residue polypeptide: Isoleucine--tRNA ligase (938 aa).

The 'HIGH' region motif lies at 58–68 (PYANGSIHIGH). Lysine 183 is subject to N6-acetyllysine. Glutamate 561 serves as a coordination point for L-isoleucyl-5'-AMP. The 'KMSKS' region motif lies at 602-606 (KMSKS). Residue lysine 605 participates in ATP binding. Positions 901, 904, 921, and 924 each coordinate Zn(2+).

This sequence belongs to the class-I aminoacyl-tRNA synthetase family. IleS type 1 subfamily. As to quaternary structure, monomer. Zn(2+) is required as a cofactor.

Its subcellular location is the cytoplasm. The enzyme catalyses tRNA(Ile) + L-isoleucine + ATP = L-isoleucyl-tRNA(Ile) + AMP + diphosphate. In terms of biological role, catalyzes the attachment of isoleucine to tRNA(Ile). As IleRS can inadvertently accommodate and process structurally similar amino acids such as valine, to avoid such errors it has two additional distinct tRNA(Ile)-dependent editing activities. One activity is designated as 'pretransfer' editing and involves the hydrolysis of activated Val-AMP. The other activity is designated 'posttransfer' editing and involves deacylation of mischarged Val-tRNA(Ile). The protein is Isoleucine--tRNA ligase of Escherichia coli O6:K15:H31 (strain 536 / UPEC).